Reading from the N-terminus, the 150-residue chain is MQIILLDKVVNLGNLGQIVKVKDGYARNFLIPTGRARRATEAAKAEFEAKRAELEKTAATNLAQAQAQGEKLAGTAIKLTQKAGVDGRLFGSVTNHDIAEELNKQGFKLAKSRIRLPNGPIKMVGDNTVSVVLHTDVVVEVIVSVYGETA.

Belongs to the bacterial ribosomal protein bL9 family.

Binds to the 23S rRNA. The polypeptide is Large ribosomal subunit protein bL9 (Verminephrobacter eiseniae (strain EF01-2)).